Here is a 479-residue protein sequence, read N- to C-terminus: Ribosomal RNA small subunit methyltransferase F (479 aa).

Residues 125 to 131 (AAAPGSK), glutamate 149, aspartate 176, and aspartate 194 contribute to the S-adenosyl-L-methionine site. The active-site Nucleophile is cysteine 247.

The protein belongs to the class I-like SAM-binding methyltransferase superfamily. RsmB/NOP family.

Its subcellular location is the cytoplasm. It catalyses the reaction cytidine(1407) in 16S rRNA + S-adenosyl-L-methionine = 5-methylcytidine(1407) in 16S rRNA + S-adenosyl-L-homocysteine + H(+). In terms of biological role, specifically methylates the cytosine at position 1407 (m5C1407) of 16S rRNA. The polypeptide is Ribosomal RNA small subunit methyltransferase F (Salmonella newport (strain SL254)).